The primary structure comprises 437 residues: Glucose-1-phosphate adenylyltransferase (437 aa).

Residues Tyr-113, Gly-179, 194–195 (EK), and Ser-212 each bind alpha-D-glucose 1-phosphate.

Belongs to the bacterial/plant glucose-1-phosphate adenylyltransferase family. In terms of assembly, homotetramer.

It catalyses the reaction alpha-D-glucose 1-phosphate + ATP + H(+) = ADP-alpha-D-glucose + diphosphate. Its pathway is glycan biosynthesis; glycogen biosynthesis. Involved in the biosynthesis of ADP-glucose, a building block required for the elongation reactions to produce glycogen. Catalyzes the reaction between ATP and alpha-D-glucose 1-phosphate (G1P) to produce pyrophosphate and ADP-Glc. The polypeptide is Glucose-1-phosphate adenylyltransferase (Haemophilus influenzae (strain ATCC 51907 / DSM 11121 / KW20 / Rd)).